Here is an 85-residue protein sequence, read N- to C-terminus: Beta-mammal/insect toxin Lqhb1 (85 aa).

The signal sequence occupies residues 1–19; the sequence is MKIIIFLIVSSLMLIGVKT. One can recognise an LCN-type CS-alpha/beta domain in the interval 20–82; the sequence is DNGYLLNKAT…LWAYATNKCN (63 aa). Disulfide bonds link C31-C81, C35-C56, C42-C63, and C46-C65.

The protein belongs to the long (4 C-C) scorpion toxin superfamily. Sodium channel inhibitor family. Expressed by the venom gland.

It is found in the secreted. Its function is as follows. Beta toxins bind voltage-independently at site-4 of sodium channels (Nav) and shift the voltage of activation toward more negative potentials thereby affecting sodium channel activation and promoting spontaneous and repetitive firing. Competes, with apparent high affinity, with anti-insect and anti-mammalian beta-toxins for binding to cockroach and rat brain synaptosomes, respectively. Also competes with an anti-mammalian alpha-toxin on binding to rat brain sodium channels. Has a weak effect on cardiac sodium channels and a marked effect on rat brain and skeletal muscle sodium channels. This chain is Beta-mammal/insect toxin Lqhb1, found in Leiurus hebraeus (Hebrew deathstalker scorpion).